Consider the following 423-residue polypeptide: F-box protein At1g52495 (423 aa).

The F-box domain maps to K49–S95.

The sequence is that of F-box protein At1g52495 from Arabidopsis thaliana (Mouse-ear cress).